Reading from the N-terminus, the 252-residue chain is Phosphate import ATP-binding protein PstB 1 (252 aa).

The ABC transporter domain maps to 6–247 (LQIRDLSVYY…PKRKETEDYI (242 aa)). 38–45 (GPSGSGKS) is a binding site for ATP.

This sequence belongs to the ABC transporter superfamily. Phosphate importer (TC 3.A.1.7) family. The complex is composed of two ATP-binding proteins (PstB), two transmembrane proteins (PstC and PstA) and a solute-binding protein (PstS).

It localises to the cell membrane. The enzyme catalyses phosphate(out) + ATP + H2O = ADP + 2 phosphate(in) + H(+). Part of the ABC transporter complex PstSACB involved in phosphate import. Responsible for energy coupling to the transport system. This chain is Phosphate import ATP-binding protein PstB 1, found in Streptococcus pyogenes serotype M6 (strain ATCC BAA-946 / MGAS10394).